The chain runs to 322 residues: Lignin-forming anionic peroxidase (322 aa).

The first 27 residues, 1 to 27, serve as a signal peptide directing secretion; that stretch reads MNTPTQSFRAKAAIFSLLLLSCMQCHA. Residue glutamine 28 is modified to Pyrrolidone carboxylic acid. 4 disulfides stabilise this stretch: cysteine 38–cysteine 118, cysteine 71–cysteine 76, cysteine 124–cysteine 318, and cysteine 203–cysteine 229. The Proton acceptor role is filled by histidine 69. 5 residues coordinate Ca(2+): aspartate 70, valine 73, glycine 75, aspartate 77, and serine 79. Proline 166 provides a ligand contact to substrate. A heme b-binding site is contributed by histidine 196. Position 197 (threonine 197) interacts with Ca(2+). N-linked (GlcNAc...) asparagine glycosylation is present at asparagine 213. Ca(2+) is bound by residues aspartate 242, threonine 245, and aspartate 250.

The protein belongs to the peroxidase family. Classical plant (class III) peroxidase subfamily. Ca(2+) is required as a cofactor. It depends on heme b as a cofactor. Mesophyll protoplasts and to a much lesser extent, roots and germinating seeds.

Its subcellular location is the secreted. It catalyses the reaction 2 a phenolic donor + H2O2 = 2 a phenolic radical donor + 2 H2O. In terms of biological role, removal of H(2)O(2), oxidation of toxic reductants, biosynthesis and degradation of lignin, suberization, auxin catabolism, response to environmental stresses such as wounding, pathogen attack and oxidative stress. These functions might be dependent on each isozyme/isoform in each plant tissue. Its function is as follows. Plays an integral role in secondary cell wall biosynthesis by the polymerization of cinnamyl alcohols into lignin and by forming rigid cross-links between cellulose, pectin, hydroxy-proline-rich glycoproteins, and lignin. The sequence is that of Lignin-forming anionic peroxidase from Nicotiana sylvestris (Wood tobacco).